The sequence spans 156 residues: uncharacterized protein (156 aa).

Positions 1-12 (MSARPSLPPLPA) are enriched in pro residues. 2 disordered regions span residues 1-89 (MSAR…PPPA) and 129-156 (PLSP…TMRD). Residues 49-67 (ARAEEAGGEEGKREAEAWT) show a composition bias toward basic and acidic residues.

This is an uncharacterized protein from Homo sapiens (Human).